A 345-amino-acid polypeptide reads, in one-letter code: Mitochondrial metalloendopeptidase OMA1 (345 aa).

Residues 1 to 67 (MLRNIIRFKG…ILLDKSSRKY (67 aa)) are Mitochondrial matrix-facing. The chain crosses the membrane as a helical span at residues 68–88 (LALLFGGCSLFYYTHLDKAPV). The Mitochondrial intermembrane portion of the chain corresponds to 89–345 (SDRSRFIWVS…GNYYKSFFSM (257 aa)). Residue H203 participates in Zn(2+) binding. The active site involves E204. Residues H207 and E257 each contribute to the Zn(2+) site. A disulfide bond links C272 and C332. Residues 314–345 (ENMSKWLPKANEIYEQSDCSSMGNYYKSFFSM) form a required for protease activation region.

Belongs to the peptidase M48 family. Homooligomer. Zn(2+) serves as cofactor. Forms a redox-dependent disulfide bond, which plays a structural role and regulates its conformational stability and activity.

The protein resides in the mitochondrion inner membrane. With respect to regulation, protease activity is induced in response to various mitochondrial stress, such as changes in membrane potential, oxidative stress or chronic hyperpolarization, and depends on its C-terminal region. In terms of biological role, protease that is part of the quality control system in the inner membrane of mitochondria. Activated in response to various mitochondrial stress, leading to the proteolytic cleavage of target proteins, such as OXA1 and COX1. Cleaves and thereby promotes the turnover of mistranslated or misfolded membrane proteins. Cleaves the misfolded multi-pass membrane protein OXA1. Involved in quality control of cytochrome oxidase assembly: mediates the cleavage of COX1 in cells lacking COA2. Required for the stability of the respiratory supercomplexes. Required for TOR signaling. The protein is Mitochondrial metalloendopeptidase OMA1 of Saccharomyces cerevisiae (strain ATCC 204508 / S288c) (Baker's yeast).